The chain runs to 268 residues: MGRGKIEIKRIENANSRQVTFSKRRSGLLKKARELSVLCDAEVAVIVFSKSGKLFEYSSTGMKQTLSRYGNHQSSSASKAEEDCAEVDILKDQLSKLQEKHLQLQGKGLNPLTFKELQSLEQQLYHALITVRERKERLLTNQLEESRLKEQRAELENETLRRQVQELRSFLPSFTHYVPSYIKCFAIDPKNALINHDSKCSLQNTDSDTTLQLGLPGEAHDRRTNEGERESPSSDSVTTNTSSETAERGDQSSLANSPPEAKRQRFSV.

Residues 1–61 enclose the MADS-box domain; the sequence is MGRGKIEIKR…GKLFEYSSTG (61 aa). Positions 80–170 constitute a K-box domain; it reads AEEDCAEVDI…RRQVQELRSF (91 aa). Residues 205 to 268 are disordered; it reads TDSDTTLQLG…PEAKRQRFSV (64 aa). Residues 218–232 are compositionally biased toward basic and acidic residues; sequence EAHDRRTNEGERESP. The span at 233-244 shows a compositional bias: polar residues; the sequence is SSDSVTTNTSSE.

Homodimer. Interacts with SVP, AGL24, AP1, AGL6, AG, AGL1, AGL11, AGL5, AGL16, SOC1 and AGL21. Expressed at low levels in flowers and siliques. Also present in seedlings. Detected during embryogenesis and accumulates during early seed development (at protein level). Expressed in shoot apices and the base of leaf petioles.

The protein localises to the nucleus. The protein resides in the cytoplasm. Its function is as follows. Transcription factor involved in the negative regulation of flowering, probably through the photoperiodic pathway. Acts both as an activator and as a repressor of transcription. Binds DNA in a sequence-specific manner in large CArG motif 5'-CC (A/T)8 GG-3'. Participates probably in the regulation of programs active during the early stages of embryo development. Prevents premature perianth senescence and abscission, fruits development and seed desiccation. Stimulates the expression of at least DTA4, LEC2, FUS3, ABI3, AT4G38680/CSP2 and GRP2B/CSP4. Can enhance somatic embryo development in vitro. In Arabidopsis thaliana (Mouse-ear cress), this protein is Agamous-like MADS-box protein AGL15 (AGL15).